We begin with the raw amino-acid sequence, 339 residues long: Deubiquitinase and deneddylase Dub2 (339 aa).

The helical transmembrane segment at 36 to 56 (IIIALFLIVISCGLILCAYTF) threads the bilayer. Active-site residues include His203, Asp220, and Cys282.

This sequence belongs to the peptidase C48 family.

Its subcellular location is the secreted. The protein localises to the host cell. It localises to the membrane. Functionally, effector proteins function to alter host cell physiology and promote bacterial survival in host tissues. This protease possesses deubiquitinating and deneddylating activities. The sequence is that of Deubiquitinase and deneddylase Dub2 (cdu2) from Chlamydia trachomatis serovar B (strain Jali20/OT).